Consider the following 357-residue polypeptide: Aurora kinase A- and ninein-interacting protein (357 aa).

Residues 72–93 show a composition bias toward polar residues; the sequence is TSQQGKTNGADQRSVSSHTESQ. The tract at residues 72 to 102 is disordered; that stretch reads TSQQGKTNGADQRSVSSHTESQTNKESKEDA. The interval 189 to 357 is interaction with AURKA; sequence QKEGEDSSCE…EGNQVIRHQA (169 aa). The interaction with RBBP8/CtIP stretch occupies residues 281–357; sequence KDSWSQLFTE…EGNQVIRHQA (77 aa). S292 is modified (phosphoserine).

It belongs to the AUNIP family. In terms of assembly, interacts (via C-terminus) with AURKA (via C-terminus). Interacts (via N-terminus) with NIN; this interaction blocks NIN phosphorylation by both AURKA and GSK3B. Identified in a complex with NIN and AURKA. Interacts with RBBP8/CtIP.

The protein resides in the nucleus. The protein localises to the chromosome. It localises to the cytoplasm. Its subcellular location is the cytoskeleton. It is found in the microtubule organizing center. The protein resides in the centrosome. The protein localises to the spindle pole. DNA-binding protein that accumulates at DNA double-strand breaks (DSBs) following DNA damage and promotes DNA resection and homologous recombination. Serves as a sensor of DNA damage: binds DNA with a strong preference for DNA substrates that mimic structures generated at stalled replication forks, and anchors RBBP8/CtIP to DSB sites to promote DNA end resection and ensuing homologous recombination repair. Inhibits non-homologous end joining (NHEJ). Required for the dynamic movement of AURKA at the centrosomes and spindle apparatus during the cell cycle. The sequence is that of Aurora kinase A- and ninein-interacting protein from Bos taurus (Bovine).